Here is a 585-residue protein sequence, read N- to C-terminus: Arginine--tRNA ligase (585 aa).

Residues 131–141 carry the 'HIGH' region motif; that stretch reads ANPTGPMHVGH.

Belongs to the class-I aminoacyl-tRNA synthetase family. As to quaternary structure, monomer.

Its subcellular location is the cytoplasm. The catalysed reaction is tRNA(Arg) + L-arginine + ATP = L-arginyl-tRNA(Arg) + AMP + diphosphate. This is Arginine--tRNA ligase from Bartonella quintana (strain Toulouse) (Rochalimaea quintana).